The primary structure comprises 675 residues: Protein PALS1 (675 aa).

Disordered stretches follow at residues 1–34 (MTTS…KHRE) and 51–78 (RRSA…KKQE). The interval 1–345 (MTTSHMNGHV…QQIKPPPAKE (345 aa)) is required for the correct localization of PALS1 and PATJ at cell-cell contacts and the normal formation of tight junctions and adherens junctions. 2 stretches are compositionally biased toward basic and acidic residues: residues 10-34 (VTEE…KHRE) and 54-78 (AQLE…KKQE). Phosphoserine occurs at positions 14 and 25. The interval 21–140 (VDLASPEEHQ…LKHIQHTLID (120 aa)) is interaction with PARD6B. Phosphoserine is present on residues serine 83 and serine 84. L27 domains follow at residues 120–177 (KILE…NKAS) and 179–235 (PFPL…MQLE). The interaction with LIN7C stretch occupies residues 181 to 243 (PLISNAQDLA…LEPITDERVY (63 aa)). Residues 256–336 (IVRIEKARDI…TLTFVLIPSQ (81 aa)) form the PDZ domain. The SH3 domain maps to 345 to 417 (ETVIHVKAHF…PGKSFQQQRE (73 aa)). Residues 479–660 (KRPIILIGPQ…AYQELLRLIN (182 aa)) enclose the Guanylate kinase-like domain. 486 to 493 (GPQNCGQN) is a binding site for ATP.

It belongs to the MAGUK family. As to quaternary structure, heterodimer with MPP1. Forms a heterotrimeric complex composed of PALS1, LIN7B and PATJ; the N-terminal L27 domain of PALS1 interacts with the L27 domain of PATJ and the C-terminal L27 domain of PALS1 interacts with the L27 domain of LIN7B. Component of a complex composed of PALS1, CRB1 and MPP4. Component of a complex whose core is composed of ARHGAP17, AMOT, PALS1, PATJ and PARD3/PAR3. Component of a complex composed of PALS1, CRB1 and EPB41L5. Within the complex, interacts (via HOOK domain) with EPB41L5 (via FERM domain), and interacts with CRB1 (via intracellular domain). Component of a complex composed of PALS1, MPP3 and CRB1; PALS1 acts as a bridging protein between MPP3 (via guanylate kinase-like domain) and CRB1. Component of a complex composed of CRB3, PALS1 and PATJ. As part of the Crumbs complex; interacts with WWP1, the interaction is enhanced by AMOTL2 and facilitates WWP1 localization to the plasma membrane. The Crumbs complex promotes monoubiquitination of AMOTL2 by WWP1, which activates the Hippo signaling pathway. Interacts (via PDZ domain) with PATJ (via N-terminus). Interacts with EZR. Interacts (via PDZ domain) with CRB1 (via C-terminal ERLI motif). While the PDZ domain is sufficient for interaction with CRB1, the adjacent SH3 and guanylate kinase-like domains are likely to contribute to a high affinity interaction. Interacts with WWTR1/TAZ (via WW domain). Interacts with MPP7. Interacts (via PDZ domain) with CRB3 (via C-terminus). Interacts with LIN7C. Interacts with MPDZ. Interacts with PARD6B. Interacts with SC6A1. Interacts with CDH5; the interaction promotes PALS1 localization to cell junctions and is required for CDH5-mediated vascular lumen formation and endothelial cell. Interacts with NPHP1 (via coiled coil and SH3 domains). Interacts with NPHP4. Interacts with CRB2.

The protein resides in the golgi apparatus. It is found in the cell membrane. The protein localises to the endomembrane system. Its subcellular location is the cell junction. It localises to the tight junction. The protein resides in the adherens junction. It is found in the cell projection. The protein localises to the axon. Its subcellular location is the perikaryon. It localises to the apical cell membrane. Its function is as follows. Plays a role in tight junction biogenesis and in the establishment of cell polarity in epithelial cells. Also involved in adherens junction biogenesis by ensuring correct localization of the exocyst complex protein EXOC4/SEC8 which allows trafficking of adherens junction structural component CDH1 to the cell surface. Plays a role through its interaction with CDH5 in vascular lumen formation and endothelial membrane polarity. Required during embryonic and postnatal retinal development. Required for the maintenance of cerebellar progenitor cells in an undifferentiated proliferative state, preventing premature differentiation, and is required for cerebellar histogenesis, fissure formation, cerebellar layer organization and cortical development. Plays a role in neuronal progenitor cell survival, potentially via promotion of mTOR signaling. Plays a role in the radial and longitudinal extension of the myelin sheath in Schwann cells. May modulate SC6A1/GAT1-mediated GABA uptake by stabilizing the transporter. May play a role in the T-cell receptor-mediated activation of NF-kappa-B. Required for localization of EZR to the apical membrane of parietal cells and may play a role in the dynamic remodeling of the apical cytoskeleton. Required for the normal polarized localization of the vesicular marker STX4. Required for the correct trafficking of the myelin proteins PMP22 and MAG. Involved in promoting phosphorylation and cytoplasmic retention of transcriptional coactivators YAP1 and WWTR1/TAZ which leads to suppression of TGFB1-dependent transcription of target genes such as CCN2/CTGF, SERPINE1/PAI1, SNAI1/SNAIL1 and SMAD7. The polypeptide is Protein PALS1 (Pongo abelii (Sumatran orangutan)).